Here is a 319-residue protein sequence, read N- to C-terminus: N-acyl-aromatic-L-amino acid amidohydrolase (carboxylate-forming) (319 aa).

A hydrolytic domain region spans residues 1-210 (MCSLPGSRKP…SILDFIELFN (210 aa)). 2 residues coordinate Zn(2+): His-21 and Glu-24. Substrate-binding positions include Arg-63 and 70–71 (NR). His-116 is a binding site for Zn(2+). Substrate contacts are provided by Glu-178 and Tyr-288. Residues 211–318 (QGMEFPAFEM…PGLTPSSTQT (108 aa)) form a shielding domain region. A Phosphothreonine modification is found at Thr-318.

The protein belongs to the AspA/AstE family. Aspartoacylase subfamily. As to quaternary structure, exists as a mixture of homodimers and homotetramer, both catalytically active. The cofactor is Zn(2+).

It is found in the apical cell membrane. The protein resides in the cytoplasm. The catalysed reaction is an N-acyl-aromatic L-alpha-amino acid + H2O = an aromatic L-alpha-amino acid + a carboxylate. It catalyses the reaction an N-acetyl-L-cysteine-S-conjugate + H2O = an S-substituted L-cysteine + acetate. Functionally, plays an important role in deacetylating mercapturic acids in kidney proximal tubules. Also acts on N-acetyl-aromatic amino acids. The chain is N-acyl-aromatic-L-amino acid amidohydrolase (carboxylate-forming) (Acy3) from Rattus norvegicus (Rat).